The sequence spans 178 residues: Protein GrpE (178 aa).

Residues 1-11 show a composition bias toward basic and acidic residues; that stretch reads MADELSEKSVE. The segment at 1–32 is disordered; it reads MADELSEKSVEGTEEDGESAPAEGTTEGVPVD.

Belongs to the GrpE family. As to quaternary structure, homodimer.

The protein localises to the cytoplasm. Participates actively in the response to hyperosmotic and heat shock by preventing the aggregation of stress-denatured proteins, in association with DnaK and GrpE. It is the nucleotide exchange factor for DnaK and may function as a thermosensor. Unfolded proteins bind initially to DnaJ; upon interaction with the DnaJ-bound protein, DnaK hydrolyzes its bound ATP, resulting in the formation of a stable complex. GrpE releases ADP from DnaK; ATP binding to DnaK triggers the release of the substrate protein, thus completing the reaction cycle. Several rounds of ATP-dependent interactions between DnaJ, DnaK and GrpE are required for fully efficient folding. This Methanothrix thermoacetophila (strain DSM 6194 / JCM 14653 / NBRC 101360 / PT) (Methanosaeta thermophila) protein is Protein GrpE.